A 439-amino-acid polypeptide reads, in one-letter code: Glutamate-1-semialdehyde 2,1-aminomutase (439 aa).

N6-(pyridoxal phosphate)lysine is present on Lys279.

The protein belongs to the class-III pyridoxal-phosphate-dependent aminotransferase family. HemL subfamily. As to quaternary structure, homodimer. The cofactor is pyridoxal 5'-phosphate.

The protein resides in the cytoplasm. It catalyses the reaction (S)-4-amino-5-oxopentanoate = 5-aminolevulinate. It participates in porphyrin-containing compound metabolism; protoporphyrin-IX biosynthesis; 5-aminolevulinate from L-glutamyl-tRNA(Glu): step 2/2. In Rhodopirellula baltica (strain DSM 10527 / NCIMB 13988 / SH1), this protein is Glutamate-1-semialdehyde 2,1-aminomutase.